The primary structure comprises 522 residues: Zinc finger protein 329 (522 aa).

At Ser-30 the chain carries Phosphoserine. 12 consecutive C2H2-type zinc fingers follow at residues Tyr-184–His-206, Tyr-212–His-234, Tyr-240–His-262, Tyr-268–His-290, Tyr-296–His-318, Tyr-324–His-346, Phe-352–His-374, Tyr-380–His-402, Tyr-408–His-430, Tyr-436–His-458, Tyr-464–His-486, and Ser-492–His-514.

It belongs to the krueppel C2H2-type zinc-finger protein family.

It localises to the nucleus. May be involved in transcriptional regulation. This Mus musculus (Mouse) protein is Zinc finger protein 329 (Znf329).